The primary structure comprises 237 residues: Demethylmenaquinone methyltransferase (237 aa).

Residues threonine 58, aspartate 79, and asparagine 106–alanine 107 each bind S-adenosyl-L-methionine.

The protein belongs to the class I-like SAM-binding methyltransferase superfamily. MenG/UbiE family.

The enzyme catalyses a 2-demethylmenaquinol + S-adenosyl-L-methionine = a menaquinol + S-adenosyl-L-homocysteine + H(+). The protein operates within quinol/quinone metabolism; menaquinone biosynthesis; menaquinol from 1,4-dihydroxy-2-naphthoate: step 2/2. Functionally, methyltransferase required for the conversion of demethylmenaquinol (DMKH2) to menaquinol (MKH2). The polypeptide is Demethylmenaquinone methyltransferase (Bacillus cytotoxicus (strain DSM 22905 / CIP 110041 / 391-98 / NVH 391-98)).